The primary structure comprises 251 residues: PF03932 family protein CutC (251 aa).

Belongs to the CutC family.

It is found in the cytoplasm. The chain is PF03932 family protein CutC from Bacteroides fragilis (strain YCH46).